The primary structure comprises 1309 residues: Target of rapamycin complex 2 subunit ste20 (1309 aa).

Positions 24–110 (DFIKKMNTTD…IESFQGENGE (87 aa)) constitute an REM-1 domain. Positions 105–128 (QGENGEAKTGSTSLTRSASATVSR) are disordered. Polar residues predominate over residues 113–128 (TGSTSLTRSASATVSR). Residue Ser151 is modified to Phosphoserine. Residues 183–205 (NVNEKNNSSSEDTQPNGKRPSSL) are disordered. Residues 194–205 (DTQPNGKRPSSL) show a composition bias toward polar residues. A run of 6 helical transmembrane segments spans residues 285–305 (LFLDATAFSCCQMLNLPWILS), 392–412 (LIDGSISENLAASAALALVYL), 504–524 (VIDLFFLIFQVEYSSWSESFL), 564–584 (TAVLLFIFLELGLVESIVCMI), 926–946 (LNHWAISLLIFQLYDPCLEVC), and 984–1004 (LLLRFLATTVGFHYLSEINFI). A Phosphothreonine modification is found at Thr1203.

Belongs to the RICTOR family. The target of rapamycin complex 2 (TORC2) is composed of at least bit61, pop3/wat1, sin1, ste20 and tor1. Either Ser-203 or Ser-204 are phosphorylated as well.

Its subcellular location is the membrane. In terms of biological role, component of TORC2, which regulates multiple cellular processes to control cell growth in response to environmental signals. TORC2 is required for cell survival under various stress conditions. TORC2 positively controls G1 cell-cycle arrest, sexual development and amino acid uptake. Positively regulates amino acid uptake through the control of expression of amino acid permeases. The sequence is that of Target of rapamycin complex 2 subunit ste20 from Schizosaccharomyces pombe (strain 972 / ATCC 24843) (Fission yeast).